The sequence spans 669 residues: Potassium voltage-gated channel subfamily KQT member 1 (669 aa).

Residues 1-120 lie on the Cytoplasmic side of the membrane; sequence MDTASSPPNA…YNFLERPTGW (120 aa). Serine 27 is subject to Phosphoserine; by PKA. A helical membrane pass occupies residues 121-142; it reads KCFVYHFTVFLIVLVCLIFSVL. Topologically, residues 143 to 153 are extracellular; that stretch reads STIEQYAALAT. The helical transmembrane segment at 154–176 threads the bilayer; sequence GTLFWMEIVLVVFFGTEYVVRLW. Topologically, residues 177–192 are cytoplasmic; it reads SAGCRSKYVGIWGRLR. Residues 193-218 traverse the membrane as a helical segment; it reads FARKPISIIDLIVVVASMVVLCVGSK. Topologically, residues 219-226 are extracellular; it reads GQVFATSA. A helical; Voltage-sensor transmembrane segment spans residues 227–242; sequence IRGIRFLQILRMLHVD. Residues 238 to 246 form an interaction with KCNE3 region; it reads MLHVDRQGG. Topologically, residues 243–260 are cytoplasmic; sequence RQGGTWRLLGSVVFIHRQ. Position 244 (glutamine 244) interacts with a 1,2-diacyl-sn-glycero-3-phospho-(1D-myo-inositol-4,5-bisphosphate). The chain crosses the membrane as a helical span at residues 261-283; the sequence is ELITTLYIGFLGLIFSSYFVYLA. The Extracellular segment spans residues 284 to 299; the sequence is EKDAVNESGRIEFGSY. N-linked (GlcNAc...) asparagine glycosylation is present at asparagine 289. Positions 300–320 form an intramembrane region, pore-forming; sequence ADALWWGVVTVTTIGYGDKVP. The Extracellular segment spans residues 321 to 322; that stretch reads QT. The helical transmembrane segment at 323–348 threads the bilayer; sequence WVGKTIASCFSVFAISFFALPAGILG. Topologically, residues 349–669 are cytoplasmic; that stretch reads SGFALKVQQK…VPQTGPDEGS (321 aa). The interval 370 to 382 is interaction with CALM; sequence AAASLIQTAWRCY. Residues serine 407 and serine 409 each carry the phosphoserine modification. The segment at 515–529 is interaction with CALM; calcium-dependent; it reads KVIRRMQYFVAKKKF. Residues 535–572 are interaction with KCNE1 C-terminus; the sequence is PYDVRDVIEQYSQGHLNLMVRIKELQRRLDQSIGKPSL. Residues 585–621 are a coiled coil; sequence SNTIGARLNRVEDKVTQLDQRLVIITDMLHQLLSLQQ. The segment at 588 to 616 is interaction with AKAP9; sequence IGARLNRVEDKVTQLDQRLVIITDMLHQL. Positions 589 to 620 are C-terminal assembly domain (tetramerization); it reads GARLNRVEDKVTQLDQRLVIITDMLHQLLSLQ.

The protein belongs to the potassium channel family. KQT (TC 1.A.1.15) subfamily. Kv7.1/KCNQ1 sub-subfamily. Tetramer. Heterotetramer with KCNE1; targets to the membrane raft. Interacts (via C-terminus) with CALM; forms a heterooctameric structure (with 4:4 KCNQ1:CALM stoichiometry) in a calcium-independent manner. Interacts with AKAP9; targets protein kinase A (PKA) catalytic and regulatory subunits and protein phosphatase 1 (PP1) to the KCNQ1-KCNE1 complex, allowing PKA-mediated phosphorylation and increase of delayed rectifier potassium channel activity. Interacts with KCNE2; form a heterooligomer complex that targets to the membrane raft and leading to currents with an apparently instantaneous activation, a rapid deactivation process and a linear current-voltage relationship and decreases the amplitude of the outward current. Interacts with AP2M1; mediates estrogen-induced internalization via clathrin-coated vesicles. Interacts with NEDD4L; promotes internalization and decreases I(Ks) currents. Interacts with USP2; counteracts the NEDD4L-specific down-regulation of I(Ks) and restore plasma membrane localization. Heterotetramer with KCNQ5; has a voltage-gated potassium channel activity. Interacts with KCNE3; produces a current with nearly instantaneous activation with a linear current-voltage relationship and alters membrane raft localization. Interacts with KCNE4; impairs KCNQ1 localization in lipid rafts and inhibits voltage-gated potassium channel activity. Interacts with KCNE5; impairs KCNQ1 localization in lipid rafts and only conducts current upon strong and continued depolarization. Interacts with SLC5A3; forms coregulatory channel-transporter complexes that modulate Na(+)-coupled myo-inositol influx through the transporter. Post-translationally, phosphorylation at Ser-27 by PKA; increases delayed rectifier potassium channel activity of the KCNQ1-KCNE1 complex through a macromolecular complex that includes PKA, PP1, and the targeting protein AKAP9. Ubiquitinated by NEDD4L; promotes internalization. The ubiquitinylated form is internalized through a clathrin-mediated endocytosis by interacting with AP2M1 and is recycled back to the cell membrane via RAB4A and RAB11A. In terms of processing, deubiquitinated by USP2; counteracts the NEDD4L-specific down-regulation of I(Ks) and restores the membrane localization.

Its subcellular location is the cell membrane. It is found in the cytoplasmic vesicle membrane. The protein localises to the early endosome. It localises to the membrane raft. The protein resides in the endoplasmic reticulum. Its subcellular location is the basolateral cell membrane. It is found in the apical cell membrane. The catalysed reaction is K(+)(in) = K(+)(out). Its activity is regulated as follows. PIP2 molecule is essential to activate KCNQ channels by inducing the coupling of the voltage-sensing domain (VSD) and the pore-forming domain (PD). Upon channel activation, PIP2 disrupts the VSD-calmodulin/CALM interactions, causing the release of CALM from the VSD which triggers the opening of the gate. Calcium potentiates KCNQ1 channel current through calcium-bound CALM. Calcium-bound CALM competes with PIP2 to stabilize the channel open state. Functionally, pore-forming subunit of the voltage-gated potassium (Kv) channel involved in the regulation of cardiomyocyte excitability and important in normal development and functions of myocardium, inner ear, stomach and colon. Associates with KCNE beta subunits that modulates current kinetics. Induces a voltage-dependent by rapidly activating and slowly deactivating potassium-selective outward current. Also promotes a delayed voltage activated potassium current showing outward rectification characteristic. During beta-adrenergic receptor stimulation participates in cardiac repolarization by associating with KCNE1 to form the I(Ks) cardiac potassium current that increases the amplitude and slows down the activation kinetics of outward potassium current I(Ks). Muscarinic agonist oxotremorine-M strongly suppresses KCNQ1/KCNE1 current. When associated with KCNE3, forms the potassium channel that is important for cyclic AMP-stimulated intestinal secretion of chloride ions. This interaction with KCNE3 is reduced by 17beta-estradiol, resulting in the reduction of currents. During conditions of increased substrate load, maintains the driving force for proximal tubular and intestinal sodium ions absorption, gastric acid secretion, and cAMP-induced jejunal chloride ions secretion. Allows the provision of potassium ions to the luminal membrane of the secretory canaliculus in the resting state as well as during stimulated acid secretion. When associated with KCNE2, forms a heterooligomer complex leading to currents with an apparently instantaneous activation, a rapid deactivation process and a linear current-voltage relationship and decreases the amplitude of the outward current. When associated with KCNE4, inhibits voltage-gated potassium channel activity. When associated with KCNE5, this complex only conducts current upon strong and continued depolarization. Also forms a heterotetramer with KCNQ5 that has a voltage-gated potassium channel activity. Binds with phosphatidylinositol 4,5-bisphosphate. KCNQ1-KCNE2 channel associates with Na(+)-coupled myo-inositol symporter in the apical membrane of choroid plexus epithelium and regulates the myo-inositol gradient between blood and cerebrospinal fluid with an impact on neuron excitability. The chain is Potassium voltage-gated channel subfamily KQT member 1 from Rattus norvegicus (Rat).